Consider the following 344-residue polypeptide: MDKFRMLFQHFQSSSESVMNGICLLLAAVTVKLYSSFDFNCPCLVHYNALYGLGLLLTPPLALFLCGLLANRQSVVMVEEWRRPAGHRRKDPGIIRYMCSSVLQRALAAPLVWILLALLDGKCFVCAFSSSVDPEKFLDFANMTPSQVQLFLAKVPCKEDELVRDSPARKAVSRYLRCLSQAIGWSVTLLLIIAAFLARCLRPCFDQTVFLQRRYWSNYVDLEQKLFDETCCEHARDFAHRCVLHFFASMRSELQARGLRRGNAGRRLELPAVPEPPEGLDSGSGKAHLRAISSREQVDRLLSTWYSSKPPLDLAASPGLCGGGLSHRAPTLALGTRLSQHTDV.

At 1–20 (MDKFRMLFQHFQSSSESVMN) the chain is on the cytoplasmic side. The segment at 9-36 (QHFQSSSESVMNGICLLLAAVTVKLYSS) is central pore. The helical transmembrane segment at 21 to 36 (GICLLLAAVTVKLYSS) threads the bilayer. The Extracellular segment spans residues 37 to 48 (FDFNCPCLVHYN). Cystine bridges form between Cys-41/Cys-126 and Cys-43/Cys-157. A helical transmembrane segment spans residues 49-71 (ALYGLGLLLTPPLALFLCGLLAN). Residues 72-98 (RQSVVMVEEWRRPAGHRRKDPGIIRYM) lie on the Cytoplasmic side of the membrane. Cys-99 carries the S-palmitoyl cysteine lipid modification. The helical transmembrane segment at 99–124 (CSSVLQRALAAPLVWILLALLDGKCF) threads the bilayer. Over 125–176 (VCAFSSSVDPEKFLDFANMTPSQVQLFLAKVPCKEDELVRDSPARKAVSRYL) the chain is Extracellular. Asn-142 carries N-linked (GlcNAc...) asparagine glycosylation. The chain crosses the membrane as a helical span at residues 177–202 (RCLSQAIGWSVTLLLIIAAFLARCLR). Residues Cys-200 and Cys-204 are each lipidated (S-palmitoyl cysteine). Over 203–344 (PCFDQTVFLQ…GTRLSQHTDV (142 aa)) the chain is Cytoplasmic.

Belongs to the CALHM family. Associates with CALHM1 as a pore-forming subunit in a hetero-hexameric channel complex. N-glycosylated. In terms of processing, palmitoylated by ZDHHC3 and ZDHHC15. Palmitoylation positively regulates CALHM1:CALHM3 channel conductance. In terms of tissue distribution, specifically expressed in circumvallate taste bud cells.

Its subcellular location is the basolateral cell membrane. It carries out the reaction ATP(in) = ATP(out). It catalyses the reaction Ca(2+)(in) = Ca(2+)(out). The catalysed reaction is Na(+)(in) = Na(+)(out). The enzyme catalyses K(+)(in) = K(+)(out). It carries out the reaction chloride(in) = chloride(out). Pore-forming subunit of gustatory voltage-gated ion channels required for sensory perception of sweet, bitter and umami tastes. With CALHM1 forms a fast-activating voltage-gated ATP-release channel in type II taste bud cells, ATP acting as a neurotransmitter to activate afferent neural gustatory pathways. Acts both as a voltage-gated and calcium-activated ion channel: mediates neuronal excitability in response to membrane depolarization and low extracellular Ca(2+) concentration. Has poor ion selectivity and forms a wide pore (around 14 Angstroms) that mediates permeation of small ions including Ca(2+), Na(+), K(+) and Cl(-), as well as larger ions such as ATP(4-). In Homo sapiens (Human), this protein is Calcium homeostasis modulator protein 3.